The sequence spans 284 residues: Lipase chaperone (284 aa).

Residues 4 to 24 traverse the membrane as a helical segment; sequence IAWSLGILVTIGALCAIVWPS.

It belongs to the lipase chaperone family.

It is found in the cell inner membrane. Its function is as follows. May be involved in the folding of the extracellular lipase during its passage through the periplasm. This chain is Lipase chaperone (lifO), found in Vibrio cholerae serotype O1 (strain ATCC 39315 / El Tor Inaba N16961).